Here is a 442-residue protein sequence, read N- to C-terminus: Dihydrolipoyllysine-residue acetyltransferase component of pyruvate dehydrogenase complex (442 aa).

The Lipoyl-binding domain maps to 2–77 (AFEFKLPDIG…TVGQTIITFD (76 aa)). Residue K43 is modified to N6-lipoyllysine. The segment covering 84–97 (LQFKGSDESDDAKT) has biased composition (basic and acidic residues). The segment at 84–136 (LQFKGSDESDDAKTEAQVQSTAEAGQDVAKEEQAQEPAKATGAGQQDQAEVDP) is disordered. The Peripheral subunit-binding (PSBD) domain occupies 141–178 (IAMPSVRKYAREKGVDIRKVTGSGNNGRVVKEDIDSFV). Over residues 182-208 (AQEAAPQETAAPQETAAKPAAAPAPEG) the composition is skewed to low complexity. The disordered stretch occupies residues 182 to 215 (AQEAAPQETAAPQETAAKPAAAPAPEGEFPETRE). The active site involves H413.

Belongs to the 2-oxoacid dehydrogenase family. As to quaternary structure, forms a 24-polypeptide structural core with octahedral symmetry. (R)-lipoate serves as cofactor.

The catalysed reaction is N(6)-[(R)-dihydrolipoyl]-L-lysyl-[protein] + acetyl-CoA = N(6)-[(R)-S(8)-acetyldihydrolipoyl]-L-lysyl-[protein] + CoA. The pyruvate dehydrogenase complex catalyzes the overall conversion of pyruvate to acetyl-CoA and CO(2). It contains multiple copies of three enzymatic components: pyruvate dehydrogenase (E1), dihydrolipoamide acetyltransferase (E2) and lipoamide dehydrogenase (E3). Its function is as follows. The B.subtilis PDH complex also possesses branched-chain 2-oxoacid dehydrogenase (BCDH) activity. The polypeptide is Dihydrolipoyllysine-residue acetyltransferase component of pyruvate dehydrogenase complex (pdhC) (Bacillus subtilis (strain 168)).